Consider the following 580-residue polypeptide: Adenine deaminase 2 (580 aa).

This sequence belongs to the metallo-dependent hydrolases superfamily. Adenine deaminase family. Requires Mn(2+) as cofactor.

The catalysed reaction is adenine + H2O + H(+) = hypoxanthine + NH4(+). The polypeptide is Adenine deaminase 2 (Latilactobacillus sakei subsp. sakei (strain 23K) (Lactobacillus sakei subsp. sakei)).